We begin with the raw amino-acid sequence, 829 residues long: Probable methyltransferase PMT26 (829 aa).

Residues methionine 1–asparagine 17 lie on the Cytoplasmic side of the membrane. The chain crosses the membrane as a helical; Signal-anchor for type II membrane protein span at residues tyrosine 18–methionine 38. Over threonine 39 to glycine 829 the chain is Lumenal. The tract at residues aspartate 55–alanine 258 is disordered. Basic and acidic residues-rich tracts occupy residues asparagine 85–serine 143, leucine 151–asparagine 160, threonine 168–threonine 177, and glutamate 187–threonine 231. Residues asparagine 215, asparagine 247, asparagine 264, and asparagine 270 are each glycosylated (N-linked (GlcNAc...) asparagine). Over residues glutamine 241–aspartate 252 the composition is skewed to polar residues. The tract at residues glycine 271–glycine 291 is disordered. The span at serine 280–glycine 291 shows a compositional bias: basic and acidic residues. N-linked (GlcNAc...) asparagine glycans are attached at residues asparagine 302, asparagine 579, asparagine 595, and asparagine 756.

The protein belongs to the methyltransferase superfamily.

It localises to the golgi apparatus membrane. This is Probable methyltransferase PMT26 from Arabidopsis thaliana (Mouse-ear cress).